Here is a 282-residue protein sequence, read N- to C-terminus: Pantothenate synthetase (282 aa).

Met30–His37 contributes to the ATP binding site. Catalysis depends on His37, which acts as the Proton donor. Gln61 is a binding site for (R)-pantoate. Beta-alanine is bound at residue Gln61. Gly147–Asp150 provides a ligand contact to ATP. Gln153 is a binding site for (R)-pantoate. ATP-binding positions include Val176 and Leu184–Arg187.

It belongs to the pantothenate synthetase family. In terms of assembly, homodimer.

Its subcellular location is the cytoplasm. The enzyme catalyses (R)-pantoate + beta-alanine + ATP = (R)-pantothenate + AMP + diphosphate + H(+). Its pathway is cofactor biosynthesis; (R)-pantothenate biosynthesis; (R)-pantothenate from (R)-pantoate and beta-alanine: step 1/1. Catalyzes the condensation of pantoate with beta-alanine in an ATP-dependent reaction via a pantoyl-adenylate intermediate. This is Pantothenate synthetase from Bacteroides thetaiotaomicron (strain ATCC 29148 / DSM 2079 / JCM 5827 / CCUG 10774 / NCTC 10582 / VPI-5482 / E50).